The primary structure comprises 610 residues: Glutamine--fructose-6-phosphate aminotransferase [isomerizing] (610 aa).

Catalysis depends on Cys-2, which acts as the Nucleophile; for GATase activity. The 217-residue stretch at 2–218 (CGIVGAVAQR…EGDVAEITRR (217 aa)) folds into the Glutamine amidotransferase type-2 domain. SIS domains follow at residues 286 to 426 (AAEI…QQGR) and 459 to 600 (LATD…VDQP). The active-site For Fru-6P isomerization activity is the Lys-605.

In terms of assembly, homodimer.

It is found in the cytoplasm. The enzyme catalyses D-fructose 6-phosphate + L-glutamine = D-glucosamine 6-phosphate + L-glutamate. Functionally, catalyzes the first step in hexosamine metabolism, converting fructose-6P into glucosamine-6P using glutamine as a nitrogen source. The chain is Glutamine--fructose-6-phosphate aminotransferase [isomerizing] from Vibrio vulnificus (strain YJ016).